The chain runs to 271 residues: DNA-binding protein HEXBP (271 aa).

Basic and acidic residues-rich tracts occupy residues 1–12 (MSETEDVKRPRT) and 21–42 (CGKEGHYARECPEADSKGDERS). Residues 1–42 (MSETEDVKRPRTESSTSCRNCGKEGHYARECPEADSKGDERS) are disordered. CCHC-type zinc fingers lie at residues 16–33 (TSCRNCGKEGHYARECPE), 43–60 (TTCFRCGEEGHMSRECPN), 70–87 (MTCFRCGEAGHMSRDCPN), and 97–114 (FECYKCGQEGHLSRDCPS). A disordered region spans residues 107–136 (HLSRDCPSSQGGSRGGYGQKRGRSGAQGGY). Residues 118–136 (GSRGGYGQKRGRSGAQGGY) are compositionally biased toward gly residues. 5 consecutive CCHC-type zinc fingers follow at residues 140 to 157 (RTCYKCGDAGHISRDCPN), 168 to 185 (RTCYKCGDAGHISRDCPN), 196 to 213 (RKCYKCGESGHMSRECPS), 222 to 239 (RACYKCGKPGHISRECPE), and 253 to 270 (RTCYKCGEAGHISRDCPS).

It localises to the nucleus. Binds to single-stranded DNA located in the 5' hexanucleotide repeat region of the L.major leishmanolysin (GP63) gene. The sequence is that of DNA-binding protein HEXBP (HEXBP) from Leishmania major.